We begin with the raw amino-acid sequence, 273 residues long: MAGYISDDTRKVTTHRLIEMKQRGEKISMLTSYDYTMAQIVDGAGIDVILVGDSASNVMAGNVTTLPITLDQMIYHGKSVVRGVKRAMVVVDMPFGSYQGNEMEGLASAIRIMKESHADALKLEGGEEIIDTVKRILSAGIPVMGHLGLMPQSINKYGTYTVRAKDDAEAEKLIRDAHLLEEAGCFGLVLEKIPAALASRVASELTIPVIGIGAGGDVDGQVLVIQDMLGMNNGFRPRFLRRYADLYTVMTDAISHYVSDVKNCDFPNEKEQY.

Mg(2+)-binding residues include aspartate 53 and aspartate 92. 3-methyl-2-oxobutanoate contacts are provided by residues 53–54 (DS), aspartate 92, and lysine 122. A Mg(2+)-binding site is contributed by glutamate 124. Catalysis depends on glutamate 191, which acts as the Proton acceptor.

It belongs to the PanB family. In terms of assembly, homodecamer; pentamer of dimers. It depends on Mg(2+) as a cofactor.

The protein resides in the cytoplasm. It carries out the reaction 3-methyl-2-oxobutanoate + (6R)-5,10-methylene-5,6,7,8-tetrahydrofolate + H2O = 2-dehydropantoate + (6S)-5,6,7,8-tetrahydrofolate. It functions in the pathway cofactor biosynthesis; (R)-pantothenate biosynthesis; (R)-pantoate from 3-methyl-2-oxobutanoate: step 1/2. Its function is as follows. Catalyzes the reversible reaction in which hydroxymethyl group from 5,10-methylenetetrahydrofolate is transferred onto alpha-ketoisovalerate to form ketopantoate. The protein is 3-methyl-2-oxobutanoate hydroxymethyltransferase of Bacteroides fragilis (strain ATCC 25285 / DSM 2151 / CCUG 4856 / JCM 11019 / LMG 10263 / NCTC 9343 / Onslow / VPI 2553 / EN-2).